We begin with the raw amino-acid sequence, 194 residues long: uncharacterized protein (194 aa).

Residues 1–20 (MLYKFTVLLLIYSYLRNLQA) form the signal peptide. N-linked (GlcNAc...) asparagine; by host glycosylation is found at Asn31, Asn72, Asn133, and Asn157.

This is an uncharacterized protein from Ostreid herpesvirus 1 (isolate France) (OsHV-1).